A 478-amino-acid polypeptide reads, in one-letter code: Putrescine oxidase (478 aa).

15 to 70 lines the FAD pocket; sequence RDVVVVGAGPAGLMAARTLVAAGRTVAVLEARDRVGGRTWSKTVDGAFLEIGGQWI.

The protein belongs to the flavin monoamine oxidase family. FAD is required as a cofactor.

It catalyses the reaction putrescine + O2 + H2O = 4-aminobutanal + H2O2 + NH4(+). In Kocuria rosea (Deinococcus erythromyxa), this protein is Putrescine oxidase (puo).